A 53-amino-acid polypeptide reads, in one-letter code: Tsetse thrombin inhibitor (53 aa).

Residues 1–21 (MKFFTVLFFLLSIIYLIVAAP) form the signal peptide.

Expressed at high levels in salivary glands and midguts of adult tsetse flies.

Its subcellular location is the secreted. In terms of biological role, potent and specific inhibitor of human thrombin. It is also a potent inhibitor of thrombin-induced platelet aggregation. It is capable of antagonizing host hemostasis and facilitating blood feeding. This is Tsetse thrombin inhibitor (TTI) from Glossina morsitans morsitans (Savannah tsetse fly).